The following is a 98-amino-acid chain: Large ribosomal subunit protein uL23 (98 aa).

It belongs to the universal ribosomal protein uL23 family. Part of the 50S ribosomal subunit. Contacts protein L29, and trigger factor when it is bound to the ribosome.

Functionally, one of the early assembly proteins it binds 23S rRNA. One of the proteins that surrounds the polypeptide exit tunnel on the outside of the ribosome. Forms the main docking site for trigger factor binding to the ribosome. This is Large ribosomal subunit protein uL23 from Rickettsia felis (strain ATCC VR-1525 / URRWXCal2) (Rickettsia azadi).